The following is a 101-amino-acid chain: Small ribosomal subunit protein uS14 (101 aa).

It belongs to the universal ribosomal protein uS14 family. Part of the 30S ribosomal subunit. Contacts proteins S3 and S10.

In terms of biological role, binds 16S rRNA, required for the assembly of 30S particles and may also be responsible for determining the conformation of the 16S rRNA at the A site. This is Small ribosomal subunit protein uS14 from Sodalis glossinidius (strain morsitans).